The following is a 120-amino-acid chain: Large ribosomal subunit protein uL18 (120 aa).

This sequence belongs to the universal ribosomal protein uL18 family. In terms of assembly, part of the 50S ribosomal subunit; part of the 5S rRNA/L5/L18/L25 subcomplex. Contacts the 5S and 23S rRNAs.

This is one of the proteins that bind and probably mediate the attachment of the 5S RNA into the large ribosomal subunit, where it forms part of the central protuberance. This Chloroherpeton thalassium (strain ATCC 35110 / GB-78) protein is Large ribosomal subunit protein uL18.